A 158-amino-acid chain; its full sequence is Transcription elongation factor GreA (158 aa).

The stretch at 14–76 forms a coiled coil; that stretch reads VKKLEEELEY…QIENMLKNAN (63 aa).

The protein belongs to the GreA/GreB family.

Necessary for efficient RNA polymerase transcription elongation past template-encoded arresting sites. The arresting sites in DNA have the property of trapping a certain fraction of elongating RNA polymerases that pass through, resulting in locked ternary complexes. Cleavage of the nascent transcript by cleavage factors such as GreA or GreB allows the resumption of elongation from the new 3'terminus. GreA releases sequences of 2 to 3 nucleotides. The protein is Transcription elongation factor GreA of Clostridium acetobutylicum (strain ATCC 824 / DSM 792 / JCM 1419 / IAM 19013 / LMG 5710 / NBRC 13948 / NRRL B-527 / VKM B-1787 / 2291 / W).